Here is a 265-residue protein sequence, read N- to C-terminus: NAD kinase 2 (265 aa).

D51 acts as the Proton acceptor in catalysis. NAD(+)-binding positions include 51–52, 122–123, R149, D151, 162–167, and A186; these read DG, NE, and TAYNKS.

Belongs to the NAD kinase family. The cofactor is a divalent metal cation.

The protein localises to the cytoplasm. It carries out the reaction NAD(+) + ATP = ADP + NADP(+) + H(+). Functionally, involved in the regulation of the intracellular balance of NAD and NADP, and is a key enzyme in the biosynthesis of NADP. Catalyzes specifically the phosphorylation on 2'-hydroxyl of the adenosine moiety of NAD to yield NADP. The protein is NAD kinase 2 of Bacillus licheniformis (strain ATCC 14580 / DSM 13 / JCM 2505 / CCUG 7422 / NBRC 12200 / NCIMB 9375 / NCTC 10341 / NRRL NRS-1264 / Gibson 46).